The chain runs to 85 residues: Large ribosomal subunit protein bL27 (85 aa).

The interval 1-20 (MAHKKGGGTTRNGRDSESKR) is disordered.

This sequence belongs to the bacterial ribosomal protein bL27 family.

This Herminiimonas arsenicoxydans protein is Large ribosomal subunit protein bL27.